Consider the following 204-residue polypeptide: Holliday junction branch migration complex subunit RuvA (204 aa).

Residues 1–64 (MIGRLQGILL…EDAHLLFGFA (64 aa)) form a domain I region. A domain II region spans residues 65–143 (QKTDRTLFRE…GVKQSDFFVE (79 aa)). The flexible linker stretch occupies residues 144-155 (STHIPLSPSIES). The tract at residues 156–204 (HSESSSDEAISALIALGYKPVEAEKMVKRVAKPELTSEQVIREALKVAL) is domain III.

This sequence belongs to the RuvA family. As to quaternary structure, homotetramer. Forms an RuvA(8)-RuvB(12)-Holliday junction (HJ) complex. HJ DNA is sandwiched between 2 RuvA tetramers; dsDNA enters through RuvA and exits via RuvB. An RuvB hexamer assembles on each DNA strand where it exits the tetramer. Each RuvB hexamer is contacted by two RuvA subunits (via domain III) on 2 adjacent RuvB subunits; this complex drives branch migration. In the full resolvosome a probable DNA-RuvA(4)-RuvB(12)-RuvC(2) complex forms which resolves the HJ.

The protein resides in the cytoplasm. Functionally, the RuvA-RuvB-RuvC complex processes Holliday junction (HJ) DNA during genetic recombination and DNA repair, while the RuvA-RuvB complex plays an important role in the rescue of blocked DNA replication forks via replication fork reversal (RFR). RuvA specifically binds to HJ cruciform DNA, conferring on it an open structure. The RuvB hexamer acts as an ATP-dependent pump, pulling dsDNA into and through the RuvAB complex. HJ branch migration allows RuvC to scan DNA until it finds its consensus sequence, where it cleaves and resolves the cruciform DNA. The chain is Holliday junction branch migration complex subunit RuvA from Haemophilus influenzae (strain ATCC 51907 / DSM 11121 / KW20 / Rd).